The following is a 222-amino-acid chain: MALSLSQTRPPSLSHSHTLSVIVPKRTFVSIRCGPRDNRGPLLKGRILSTEAIQSIQSLKRAHRTGVSLSLTLRPLRRLIKSDLISVLRELLRQDYCTLAVHVLSTLRTEYPPLDLVLYADIVNALTRNKEFDEIDRLIGEIDGIDQRSDDKALAKLIRAVVGAERRESVVRVYTLMRESGWGSESWEADEYVAEVLSKGLLRLGEPDLASQVSLKSSILKP.

Residues 1–32 (MALSLSQTRPPSLSHSHTLSVIVPKRTFVSIR) constitute a chloroplast transit peptide. PPR repeat units follow at residues 115 to 149 (DLVL…DQRS) and 150 to 184 (DDKA…GWGS).

Belongs to the PPR family. P subfamily.

Its subcellular location is the plastid. The protein resides in the chloroplast thylakoid membrane. In terms of biological role, essential protein required during embryogenesis. Mediates group II organellar RNA introns splicing (e.g. ycf3-2 and trnA). Binds weakly to specific RNA. Promotes the biogenesis of chloroplast thylakoid membranes. In Arabidopsis thaliana (Mouse-ear cress), this protein is Protein THYLAKOID ASSEMBLY 8, chloroplastic.